The chain runs to 448 residues: Signal recognition particle 54 kDa protein (448 aa).

Residues 107 to 114 (GIQGSGKT), 189 to 193 (DSAGR), and 247 to 250 (TKLD) contribute to the GTP site.

It belongs to the GTP-binding SRP family. SRP54 subfamily. As to quaternary structure, part of the signal recognition particle protein translocation system, which is composed of SRP and FtsY. Archaeal SRP consists of a 7S RNA molecule of 300 nucleotides and two protein subunits: SRP54 and SRP19.

The protein resides in the cytoplasm. The catalysed reaction is GTP + H2O = GDP + phosphate + H(+). Functionally, involved in targeting and insertion of nascent membrane proteins into the cytoplasmic membrane. Binds to the hydrophobic signal sequence of the ribosome-nascent chain (RNC) as it emerges from the ribosomes. The SRP-RNC complex is then targeted to the cytoplasmic membrane where it interacts with the SRP receptor FtsY. The sequence is that of Signal recognition particle 54 kDa protein from Thermococcus onnurineus (strain NA1).